A 201-amino-acid polypeptide reads, in one-letter code: Recombination protein RecR (201 aa).

The C4-type zinc-finger motif lies at 57-72 (CTHCRTFTEEESCAIC). Positions 81-176 (GFLCVVEQPS…KVSRIAHGIP (96 aa)) constitute a Toprim domain.

It belongs to the RecR family.

Its function is as follows. May play a role in DNA repair. It seems to be involved in an RecBC-independent recombinational process of DNA repair. It may act with RecF and RecO. The polypeptide is Recombination protein RecR (Histophilus somni (strain 129Pt) (Haemophilus somnus)).